A 309-amino-acid polypeptide reads, in one-letter code: Elongation factor Ts (309 aa).

Residues 82 to 85 (TDFV) form an involved in Mg(2+) ion dislocation from EF-Tu region.

Belongs to the EF-Ts family.

Its subcellular location is the cytoplasm. Associates with the EF-Tu.GDP complex and induces the exchange of GDP to GTP. It remains bound to the aminoacyl-tRNA.EF-Tu.GTP complex up to the GTP hydrolysis stage on the ribosome. This chain is Elongation factor Ts, found in Rickettsia peacockii (strain Rustic).